The chain runs to 633 residues: Pesticidal crystal protein Cry2Aa (633 aa).

The protein belongs to the delta endotoxin family.

Functionally, promotes colloidosmotic lysis by binding to the midgut epithelial cells of both dipteran (Aedes aegypti) and lepidopteran (Manduca sexta) larvae. The sequence is that of Pesticidal crystal protein Cry2Aa (cry2Aa) from Bacillus thuringiensis subsp. kurstaki.